The following is a 363-amino-acid chain: GTP-binding protein 1 (363 aa).

The OBG-type G domain maps to 63-287 (ARVAFIGFPS…LKERIWEELN (225 aa)). GTP-binding positions include 69 to 76 (GFPSVGKS), 115 to 119 (DLPGI), and 246 to 249 (KIDA). In terms of domain architecture, TGS spans 287–362 (NLYRIYTKRK…EEGDVVTIVT (76 aa)).

It belongs to the TRAFAC class OBG-HflX-like GTPase superfamily. OBG GTPase family.

This chain is GTP-binding protein 1 (gtp1), found in Schizosaccharomyces pombe (strain 972 / ATCC 24843) (Fission yeast).